We begin with the raw amino-acid sequence, 89 residues long: Small ribosomal subunit protein uS15 (89 aa).

It belongs to the universal ribosomal protein uS15 family. In terms of assembly, part of the 30S ribosomal subunit. Forms a bridge to the 50S subunit in the 70S ribosome, contacting the 23S rRNA.

Its function is as follows. One of the primary rRNA binding proteins, it binds directly to 16S rRNA where it helps nucleate assembly of the platform of the 30S subunit by binding and bridging several RNA helices of the 16S rRNA. In terms of biological role, forms an intersubunit bridge (bridge B4) with the 23S rRNA of the 50S subunit in the ribosome. This Pasteurella multocida (strain Pm70) protein is Small ribosomal subunit protein uS15.